Consider the following 276-residue polypeptide: Protein-glutamine gamma-glutamyltransferase (276 aa).

This sequence belongs to the bacillus TGase family.

It catalyses the reaction L-glutaminyl-[protein] + L-lysyl-[protein] = [protein]-L-lysyl-N(6)-5-L-glutamyl-[protein] + NH4(+). Its function is as follows. Probably plays a role in the assembly of the spore coat proteins by catalyzing epsilon-(gamma-glutamyl)lysine cross-links. The sequence is that of Protein-glutamine gamma-glutamyltransferase from Bacillus mycoides (strain KBAB4) (Bacillus weihenstephanensis).